The following is a 362-amino-acid chain: Phosphoserine aminotransferase (362 aa).

L-glutamate contacts are provided by Ser9 and Arg42. Pyridoxal 5'-phosphate-binding positions include 76–77 (GR), Trp102, Thr153, Asp174, and Gln197. Lys198 carries the post-translational modification N6-(pyridoxal phosphate)lysine. 239–240 (NT) serves as a coordination point for pyridoxal 5'-phosphate.

The protein belongs to the class-V pyridoxal-phosphate-dependent aminotransferase family. SerC subfamily. In terms of assembly, homodimer. Pyridoxal 5'-phosphate serves as cofactor.

The protein resides in the cytoplasm. The catalysed reaction is O-phospho-L-serine + 2-oxoglutarate = 3-phosphooxypyruvate + L-glutamate. It carries out the reaction 4-(phosphooxy)-L-threonine + 2-oxoglutarate = (R)-3-hydroxy-2-oxo-4-phosphooxybutanoate + L-glutamate. It functions in the pathway amino-acid biosynthesis; L-serine biosynthesis; L-serine from 3-phospho-D-glycerate: step 2/3. It participates in cofactor biosynthesis; pyridoxine 5'-phosphate biosynthesis; pyridoxine 5'-phosphate from D-erythrose 4-phosphate: step 3/5. Functionally, catalyzes the reversible conversion of 3-phosphohydroxypyruvate to phosphoserine and of 3-hydroxy-2-oxo-4-phosphonooxybutanoate to phosphohydroxythreonine. In Escherichia coli O6:K15:H31 (strain 536 / UPEC), this protein is Phosphoserine aminotransferase.